Here is a 390-residue protein sequence, read N- to C-terminus: Aspartate beta-hydroxylase domain-containing protein 1 (390 aa).

The tract at residues 1 to 54 (MKEGRGSFSVERGPRKERETAQSGMWKGNSPAGSQGAAMEGTGGELGGQGNWGP) is disordered. Topologically, residues 1-72 (MKEGRGSFSV…RASLIMLPWP (72 aa)) are cytoplasmic. A compositionally biased stretch (gly residues) spans 41-51 (GTGGELGGQGN). A helical transmembrane segment spans residues 73–95 (LPLASSALTLLFGALTSLFLWYC). Over 96 to 390 (YRLGSQDMQA…ALDFVFAPDP (295 aa)) the chain is Lumenal. Positions 116–143 (RGGPVGCSEAGGPSPGGPGDPGEGPRTE) are disordered. The segment covering 128 to 137 (PSPGGPGDPG) has biased composition (gly residues). A Phosphoserine modification is found at serine 129.

The protein belongs to the aspartyl/asparaginyl beta-hydroxylase family.

The protein resides in the membrane. The chain is Aspartate beta-hydroxylase domain-containing protein 1 (ASPHD1) from Homo sapiens (Human).